We begin with the raw amino-acid sequence, 63 residues long: Conotoxin Gm5.1 (63 aa).

The signal sequence occupies residues M1–T21. A propeptide spanning residues V22–R50 is cleaved from the precursor.

This sequence belongs to the conotoxin T superfamily. Contains 2 disulfide bonds that can be either 'C1-C3, C2-C4' or 'C1-C4, C2-C3', since these disulfide connectivities have been observed for conotoxins with cysteine framework V (for examples, see AC P0DQQ7 and AC P81755). In terms of tissue distribution, expressed by the venom duct.

It is found in the secreted. The polypeptide is Conotoxin Gm5.1 (Conus gloriamaris (Glory-of-the-Sea cone)).